The following is a 544-amino-acid chain: Probable protein kinase UbiB (544 aa).

One can recognise a Protein kinase domain in the interval 123-501; sequence DFDIKPLASA…KRQQGTGKFL (379 aa). ATP contacts are provided by residues 129 to 137 and Lys152; that span reads LASASIAQV. Catalysis depends on Asp287, which acts as the Proton acceptor. Transmembrane regions (helical) follow at residues 496–516 and 519–539; these read GTGK…AIWI and QLEP…LLSW.

It belongs to the ABC1 family. UbiB subfamily.

Its subcellular location is the cell inner membrane. It participates in cofactor biosynthesis; ubiquinone biosynthesis [regulation]. Its function is as follows. Is probably a protein kinase regulator of UbiI activity which is involved in aerobic coenzyme Q (ubiquinone) biosynthesis. The sequence is that of Probable protein kinase UbiB from Vibrio cholerae serotype O1 (strain ATCC 39315 / El Tor Inaba N16961).